Reading from the N-terminus, the 295-residue chain is Elongation factor Ts (295 aa).

The tract at residues 79–82 is involved in Mg(2+) ion dislocation from EF-Tu; the sequence is TDFV.

This sequence belongs to the EF-Ts family.

Its subcellular location is the cytoplasm. Associates with the EF-Tu.GDP complex and induces the exchange of GDP to GTP. It remains bound to the aminoacyl-tRNA.EF-Tu.GTP complex up to the GTP hydrolysis stage on the ribosome. This is Elongation factor Ts from Bacillus cytotoxicus (strain DSM 22905 / CIP 110041 / 391-98 / NVH 391-98).